The sequence spans 358 residues: Histidinol-phosphate aminotransferase (358 aa).

Residue Lys210 is modified to N6-(pyridoxal phosphate)lysine.

It belongs to the class-II pyridoxal-phosphate-dependent aminotransferase family. Histidinol-phosphate aminotransferase subfamily. Homodimer. Pyridoxal 5'-phosphate is required as a cofactor.

It carries out the reaction L-histidinol phosphate + 2-oxoglutarate = 3-(imidazol-4-yl)-2-oxopropyl phosphate + L-glutamate. Its pathway is amino-acid biosynthesis; L-histidine biosynthesis; L-histidine from 5-phospho-alpha-D-ribose 1-diphosphate: step 7/9. The chain is Histidinol-phosphate aminotransferase from Clostridium beijerinckii (strain ATCC 51743 / NCIMB 8052) (Clostridium acetobutylicum).